Reading from the N-terminus, the 156-residue chain is ATP synthase subunit b (156 aa).

Residues 7–27 traverse the membrane as a helical segment; that stretch reads LFAQMVVFLILAWFTMKFVWP.

Belongs to the ATPase B chain family. F-type ATPases have 2 components, F(1) - the catalytic core - and F(0) - the membrane proton channel. F(1) has five subunits: alpha(3), beta(3), gamma(1), delta(1), epsilon(1). F(0) has three main subunits: a(1), b(2) and c(10-14). The alpha and beta chains form an alternating ring which encloses part of the gamma chain. F(1) is attached to F(0) by a central stalk formed by the gamma and epsilon chains, while a peripheral stalk is formed by the delta and b chains.

It localises to the cell inner membrane. Functionally, f(1)F(0) ATP synthase produces ATP from ADP in the presence of a proton or sodium gradient. F-type ATPases consist of two structural domains, F(1) containing the extramembraneous catalytic core and F(0) containing the membrane proton channel, linked together by a central stalk and a peripheral stalk. During catalysis, ATP synthesis in the catalytic domain of F(1) is coupled via a rotary mechanism of the central stalk subunits to proton translocation. Its function is as follows. Component of the F(0) channel, it forms part of the peripheral stalk, linking F(1) to F(0). The chain is ATP synthase subunit b from Paraburkholderia phytofirmans (strain DSM 17436 / LMG 22146 / PsJN) (Burkholderia phytofirmans).